The primary structure comprises 330 residues: NADH-quinone oxidoreductase subunit H (330 aa).

8 helical membrane passes run 5 to 25 (LLTL…VLTL), 78 to 98 (WVFM…FAVI), 120 to 140 (IGLL…ALGG), 155 to 175 (AMAQ…PVVM), 191 to 211 (SLPN…AIMA), 243 to 263 (FFVG…VLFL), 271 to 291 (LPGI…FIWV), and 308 to 328 (WKIL…WLIW).

The protein belongs to the complex I subunit 1 family. As to quaternary structure, NDH-1 is composed of 14 different subunits. Subunits NuoA, H, J, K, L, M, N constitute the membrane sector of the complex.

It is found in the cell inner membrane. It carries out the reaction a quinone + NADH + 5 H(+)(in) = a quinol + NAD(+) + 4 H(+)(out). Its function is as follows. NDH-1 shuttles electrons from NADH, via FMN and iron-sulfur (Fe-S) centers, to quinones in the respiratory chain. The immediate electron acceptor for the enzyme in this species is believed to be ubiquinone. Couples the redox reaction to proton translocation (for every two electrons transferred, four hydrogen ions are translocated across the cytoplasmic membrane), and thus conserves the redox energy in a proton gradient. This subunit may bind ubiquinone. This chain is NADH-quinone oxidoreductase subunit H, found in Syntrophotalea carbinolica (strain DSM 2380 / NBRC 103641 / GraBd1) (Pelobacter carbinolicus).